The primary structure comprises 329 residues: Phosphate acyltransferase (329 aa).

Belongs to the PlsX family. As to quaternary structure, homodimer. Probably interacts with PlsY.

Its subcellular location is the cytoplasm. The enzyme catalyses a fatty acyl-[ACP] + phosphate = an acyl phosphate + holo-[ACP]. It participates in lipid metabolism; phospholipid metabolism. Functionally, catalyzes the reversible formation of acyl-phosphate (acyl-PO(4)) from acyl-[acyl-carrier-protein] (acyl-ACP). This enzyme utilizes acyl-ACP as fatty acyl donor, but not acyl-CoA. The polypeptide is Phosphate acyltransferase (Campylobacter fetus subsp. fetus (strain 82-40)).